The chain runs to 529 residues: Glycylpeptide N-tetradecanoyltransferase (529 aa).

The span at 1–10 shows a compositional bias: polar residues; that stretch reads MSEQEGNQSE. Residues 1 to 65 form a disordered region; it reads MSEQEGNQSE…ANPATKLTPS (65 aa). Basic and acidic residues predominate over residues 11-23; sequence HQSEHVGESEGKL. A compositionally biased stretch (polar residues) spans 26–40; it reads ETPTTSQSTNASTGT. Tetradecanoyl-CoA contacts are provided by residues 118-121, 252-254, and 260-264; these read FKFW, LCV, and SKRLT. Valine 529 functions as the Proton acceptor; via carboxylate in the catalytic mechanism.

Belongs to the NMT family. In terms of assembly, monomer.

It localises to the cytoplasm. The enzyme catalyses N-terminal glycyl-[protein] + tetradecanoyl-CoA = N-tetradecanoylglycyl-[protein] + CoA + H(+). Its function is as follows. Adds a myristoyl group to the N-terminal glycine residue of certain cellular proteins. In Ajellomyces capsulatus (Darling's disease fungus), this protein is Glycylpeptide N-tetradecanoyltransferase.